A 439-amino-acid chain; its full sequence is MNMDILQRQDKGIFDAITAEVRRQTETLELIASENFASRAVMEACGSVMTNKYAEGYPGKRYYGGCEFVDIAENLARDRAKKLFGCDYVNVQPHSGSSANMGVLFAVLKPGDRIMGLDLSHGGHLTHGSKVNFSGQLFEAHSYGVDRETGCIDMNKVEEMALEVRPKLIICGASAYSQGFDFKAFRDVADKVGAFLMADIAHPAGLIAAGLLNDPMPHCHFVTTTTHKTLRGPRGGMIMMGKDFENPLGITVKTKKGSRTKMMSEVIDAEIMPGIQGGPLMHIIAAKGVAFGEALQPEFKDYAVQVRNNAAVMAERFSGLDYQIVSGGTKNHLMLIDLRNKNVTGKVAENLLHDAGITVNKNMVPFDDKSPFVTSGIRIGTPAMTTRGMQESHAENIVGFIDRVISAADSEGIEKVCAEVRSDVKAMCKDLPLNDFGPE.

Residues L119 and 123–125 (GHL) contribute to the (6S)-5,6,7,8-tetrahydrofolate site. At K228 the chain carries N6-(pyridoxal phosphate)lysine. A (6S)-5,6,7,8-tetrahydrofolate-binding site is contributed by 370-372 (SPF).

Belongs to the SHMT family. As to quaternary structure, homodimer. Requires pyridoxal 5'-phosphate as cofactor.

The protein localises to the cytoplasm. It carries out the reaction (6R)-5,10-methylene-5,6,7,8-tetrahydrofolate + glycine + H2O = (6S)-5,6,7,8-tetrahydrofolate + L-serine. It participates in one-carbon metabolism; tetrahydrofolate interconversion. Its pathway is amino-acid biosynthesis; glycine biosynthesis; glycine from L-serine: step 1/1. In terms of biological role, catalyzes the reversible interconversion of serine and glycine with tetrahydrofolate (THF) serving as the one-carbon carrier. This reaction serves as the major source of one-carbon groups required for the biosynthesis of purines, thymidylate, methionine, and other important biomolecules. Also exhibits THF-independent aldolase activity toward beta-hydroxyamino acids, producing glycine and aldehydes, via a retro-aldol mechanism. This chain is Serine hydroxymethyltransferase, found in Chlorobium phaeobacteroides (strain BS1).